A 518-amino-acid polypeptide reads, in one-letter code: Glutamate--cysteine ligase (518 aa).

Belongs to the glutamate--cysteine ligase type 1 family. Type 1 subfamily.

It carries out the reaction L-cysteine + L-glutamate + ATP = gamma-L-glutamyl-L-cysteine + ADP + phosphate + H(+). Its pathway is sulfur metabolism; glutathione biosynthesis; glutathione from L-cysteine and L-glutamate: step 1/2. This is Glutamate--cysteine ligase from Escherichia coli O7:K1 (strain IAI39 / ExPEC).